We begin with the raw amino-acid sequence, 417 residues long: Gamma-glutamyl phosphate reductase (417 aa).

The protein belongs to the gamma-glutamyl phosphate reductase family.

It localises to the cytoplasm. The enzyme catalyses L-glutamate 5-semialdehyde + phosphate + NADP(+) = L-glutamyl 5-phosphate + NADPH + H(+). It functions in the pathway amino-acid biosynthesis; L-proline biosynthesis; L-glutamate 5-semialdehyde from L-glutamate: step 2/2. Its function is as follows. Catalyzes the NADPH-dependent reduction of L-glutamate 5-phosphate into L-glutamate 5-semialdehyde and phosphate. The product spontaneously undergoes cyclization to form 1-pyrroline-5-carboxylate. The chain is Gamma-glutamyl phosphate reductase from Escherichia coli O17:K52:H18 (strain UMN026 / ExPEC).